The chain runs to 192 residues: Lumican (192 aa).

LRR repeat units lie at residues 1-23 (LQWL…VFSK), 26-46 (QLKK…PLPK), 47-68 (SLED…DGLL), 69-90 (NLTF…AAFK), 94-114 (SLEY…GLPA), 115-136 (SLLT…YFKR), 139-162 (GLQY…SFNI), 164-185 (SLVE…NENL), and 186-192 (ENYYLEV).

It belongs to the small leucine-rich proteoglycan (SLRP) family. SLRP class II subfamily. Binds to laminin. Sulfated on tyrosine residue(s). In terms of processing, contains keratan sulfate.

It localises to the secreted. Its subcellular location is the extracellular space. The protein resides in the extracellular matrix. The protein is Lumican (LUM) of Oryctolagus cuniculus (Rabbit).